We begin with the raw amino-acid sequence, 231 residues long: Large ribosomal subunit protein uL1 (231 aa).

Belongs to the universal ribosomal protein uL1 family. In terms of assembly, part of the 50S ribosomal subunit.

In terms of biological role, binds directly to 23S rRNA. The L1 stalk is quite mobile in the ribosome, and is involved in E site tRNA release. Protein L1 is also a translational repressor protein, it controls the translation of the L11 operon by binding to its mRNA. The sequence is that of Large ribosomal subunit protein uL1 from Francisella philomiragia subsp. philomiragia (strain ATCC 25017 / CCUG 19701 / FSC 153 / O#319-036).